We begin with the raw amino-acid sequence, 212 residues long: Ras-related protein Rab-2A (212 aa).

GTP-binding residues include Gly-16, Val-17, Gly-18, Lys-19, Ser-20, Cys-21, and Thr-38. Ser-20 lines the Mg(2+) pocket. Residues 37–42 (LTIGVE) carry the Switch 1 motif. 2 residues coordinate Mg(2+): Thr-38 and Asp-61. Residues 63-72 (AGQESFRSIT) carry the Switch 2 motif. Residues Gly-64, Asn-119, Lys-120, Asp-122, Ala-150, and Lys-151 each contribute to the GTP site. Residues Cys-211 and Cys-212 are each lipidated (S-geranylgeranyl cysteine).

Belongs to the small GTPase superfamily. Rab family. Interacts with PRKCI. Interacts with TRIP11. Interacts (in GTP-bound form) with GARIN1B. Requires Mg(2+) as cofactor. Post-translationally, prenylated. Prenylation is required for association with cellular membranes.

It is found in the endoplasmic reticulum-Golgi intermediate compartment membrane. The protein localises to the melanosome. It localises to the endoplasmic reticulum membrane. Its subcellular location is the golgi apparatus membrane. The protein resides in the cytoplasmic vesicle. It is found in the secretory vesicle. The protein localises to the acrosome. The enzyme catalyses GTP + H2O = GDP + phosphate + H(+). Regulated by guanine nucleotide exchange factors (GEFs) which promote the exchange of bound GDP for free GTP, GTPase activating proteins (GAPs) which increase the GTP hydrolysis activity, and GDP dissociation inhibitors (GDIs) which inhibit the dissociation of the nucleotide from the GTPase. Functionally, the small GTPases Rab are key regulators of intracellular membrane trafficking, from the formation of transport vesicles to their fusion with membranes. Rabs cycle between active GTP-bound and inactive GDP-bound states. In their active state, drive transport of vesicular carriers from donor organelles to acceptor organelles to regulate the membrane traffic that maintains organelle identity and morphology. RAB2A regulates autophagy by promoting autophagosome-lysosome fusion via recruitment of the HOPS endosomal tethering complex; this process involves autophagosomal RAB2A and lysosomal RAB39A recruitment of HOPS subcomplexes VPS39-VPS11 and VPS41-VPS16-VPS18-VPS33A, respectively, which assemble into a functional complex to mediate membrane tethering and SNAREs-driven membrane fusion. Required for protein transport from the endoplasmic reticulum to the Golgi complex. Regulates the compacted morphology of the Golgi. Together with RAB2B, redundantly required for efficient autophagic flux. In Gallus gallus (Chicken), this protein is Ras-related protein Rab-2A (RAB2A).